The following is a 516-amino-acid chain: Nondiscriminating glutamyl-tRNA synthetase EARS2, mitochondrial (516 aa).

The N-terminal 39 residues, Met-1–Phe-39, are a transit peptide targeting the mitochondrion. Residue Arg-38 to Ala-40 coordinates L-glutamate. The 'HIGH' region signature appears at Pro-43–Gly-51. An ATP-binding site is contributed by His-48. Residues Glu-74, Tyr-226–Asn-230, and Arg-244 contribute to the L-glutamate site. Residues Glu-247 and Lys-282–Arg-286 each bind ATP. Residues Lys-282–Arg-286 carry the 'KMSKS' region motif.

Belongs to the class-I aminoacyl-tRNA synthetase family. Glutamate--tRNA ligase type 1 subfamily.

The protein localises to the mitochondrion matrix. The catalysed reaction is tRNA(Glx) + L-glutamate + ATP = L-glutamyl-tRNA(Glx) + AMP + diphosphate. It carries out the reaction tRNA(Glu) + L-glutamate + ATP = L-glutamyl-tRNA(Glu) + AMP + diphosphate. The enzyme catalyses tRNA(Gln) + L-glutamate + ATP = L-glutamyl-tRNA(Gln) + AMP + diphosphate. Non-discriminating glutamyl-tRNA synthetase that catalyzes aminoacylation of both mitochondrial tRNA(Glu) and tRNA(Gln) and participates in RNA aminoacylation for mitochondrial protein translation. Attachs glutamate to tRNA(Glu) or tRNA(Gln) in a two-step reaction: glutamate is first activated by ATP to form Glu-AMP and then transferred to the acceptor end of tRNA(Glu) or tRNA(Gln). In Xenopus tropicalis (Western clawed frog), this protein is Nondiscriminating glutamyl-tRNA synthetase EARS2, mitochondrial.